The primary structure comprises 180 residues: Major urinary protein 6 (180 aa).

The signal sequence occupies residues methionine 1–alanine 18. The cysteines at positions 82 and 175 are disulfide-linked.

The protein belongs to the calycin superfamily. Lipocalin family. As to expression, abundant in the urine of adult male mice but absent from that of females.

The protein resides in the secreted. Functionally, binds pheromones that are released from drying urine of males. These pheromones affect the sexual behavior of females. In Mus musculus (Mouse), this protein is Major urinary protein 6 (Mup6).